Here is a 531-residue protein sequence, read N- to C-terminus: Acetate CoA-transferase YdiF (531 aa).

Glu-333 acts as the 5-glutamyl coenzyme A thioester intermediate in catalysis.

The protein belongs to the 3-oxoacid CoA-transferase family. Homotetramer; dimer of dimers.

The catalysed reaction is an acyl-CoA + acetate = a carboxylate + acetyl-CoA. Its function is as follows. CoA transferase having broad substrate specificity for short-chain acyl-CoA thioesters with the activity decreasing when the length of the carboxylic acid chain exceeds four carbons. May play a role in short-chain fatty acid metabolism in E.coli. The sequence is that of Acetate CoA-transferase YdiF (ydiF) from Escherichia coli (strain K12).